Consider the following 233-residue polypeptide: Cilia- and flagella-associated protein 299 (233 aa).

Its subcellular location is the cytoplasm. It is found in the nucleus. Functionally, may be involved in spermatogenesis. The protein is Cilia- and flagella-associated protein 299 of Xenopus laevis (African clawed frog).